A 200-amino-acid chain; its full sequence is ASI1-immunoprecipitated protein 1 (200 aa).

The region spanning 18–101 (RTVYVDELTP…RPVRACAAEP (84 aa)) is the RRM domain.

Component of the ASI1-AIPP1-EDM2 (AAE) RNA regulatory complex composed of at least AIPP1/EDM3, ASI1 and EDM2 and may contain CPL2, AIPP2 and AIPP3/BDT1. Binds directly to ASI1 and EDM2 and may function as a bridge protein between them. Co-associates with EDM2 to histone H3 lysine 9 dimethylation (H3K9me2)-marked chromatin and transcripts at a critical proximal polyadenylation site of RPP7 to hamper proximal transcript polyadeylation/termination.

It localises to the nucleus. Prevents gene silencing by suppressing CHG methylation as well as histone H3 lysine 9 dimethylation (H3K9me2) status at target loci. Collaboratively with ASI1 and EDM2, the AAE complex regulates alternative RNA processing (e.g. alternative splicing) and epigenetic silencing (e.g. H3K9me2) of intronic heterochromatin-containing genes as well as genic heterochromatin-containing genes by promoting distal 3' polyadenylation, thus being required for the accumulation of their full-length transcripts. May also modulate transposable elements (TE) expression. Mediates RPP7-dependent race-specific disease resistance by promoting histone H3 lysine 9 dimethylation (H3K9me2) at the proximal RPP7 polyadenylation site, thus controlling alternative polyadenylation of RPP7 immune receptor transcripts and facilitating 2-phosphoserine RNAPII occupancy. In cv. Columbia, required for RPP7-dependent disease resistance against the Hyaloperonospora arabidopsidis isolate Hiks1. This is ASI1-immunoprecipitated protein 1 from Arabidopsis thaliana (Mouse-ear cress).